Consider the following 132-residue polypeptide: Small ribosomal subunit protein uS8c (132 aa).

It belongs to the universal ribosomal protein uS8 family. Part of the 30S ribosomal subunit.

The protein resides in the plastid. It is found in the chloroplast. In terms of biological role, one of the primary rRNA binding proteins, it binds directly to 16S rRNA central domain where it helps coordinate assembly of the platform of the 30S subunit. In Dioscorea elephantipes (Elephant's foot yam), this protein is Small ribosomal subunit protein uS8c (rps8).